The primary structure comprises 484 residues: Glutamate mutase epsilon subunit (484 aa).

Arg66 serves as a coordination point for L-glutamate. Position 68 (Gly68) interacts with adenosylcob(III)alamin. Residue Arg100 coordinates L-glutamate. Asn123 provides a ligand contact to adenosylcob(III)alamin. L-glutamate contacts are provided by residues 149 to 150 (RH), Glu171, and Tyr177. Residue Pro180 coordinates adenosylcob(III)alamin. Tyr181 is an L-glutamate binding site. Positions 297, 326, 330, and 334 each coordinate adenosylcob(III)alamin.

The protein belongs to the methylaspartate mutase GlmE subunit family. Heterotetramer composed of 2 epsilon subunits (GlmE) and 2 sigma subunits (GlmS). GlmE exists as a homodimer and GlmS as a monomer. It depends on adenosylcob(III)alamin as a cofactor.

It catalyses the reaction (2S,3S)-3-methyl-L-aspartate = L-glutamate. The protein operates within amino-acid degradation; L-glutamate degradation via mesaconate pathway; acetate and pyruvate from L-glutamate: step 1/4. Catalyzes the carbon skeleton rearrangement of L-glutamate to L-threo-3-methylaspartate ((2S,3S)-3-methylaspartate). This chain is Glutamate mutase epsilon subunit, found in Desulfitobacterium hafniense (strain Y51).